The following is a 209-amino-acid chain: Uracil phosphoribosyltransferase (209 aa).

Residues R79, R104, and 131 to 139 each bind 5-phospho-alpha-D-ribose 1-diphosphate; that span reads DPMLATGNS. Residues I194 and 199–201 each bind uracil; that span reads GDA. 5-phospho-alpha-D-ribose 1-diphosphate is bound at residue D200.

It belongs to the UPRTase family. Mg(2+) serves as cofactor.

It catalyses the reaction UMP + diphosphate = 5-phospho-alpha-D-ribose 1-diphosphate + uracil. It participates in pyrimidine metabolism; UMP biosynthesis via salvage pathway; UMP from uracil: step 1/1. Allosterically activated by GTP. In terms of biological role, catalyzes the conversion of uracil and 5-phospho-alpha-D-ribose 1-diphosphate (PRPP) to UMP and diphosphate. This is Uracil phosphoribosyltransferase from Polaromonas naphthalenivorans (strain CJ2).